Reading from the N-terminus, the 353-residue chain is Ferredoxin--NADP reductase (353 aa).

Threonine 25, glutamate 44, glutamine 52, tyrosine 57, valine 97, phenylalanine 132, aspartate 298, and serine 339 together coordinate FAD.

It belongs to the ferredoxin--NADP reductase type 2 family. Homodimer. FAD serves as cofactor.

It catalyses the reaction 2 reduced [2Fe-2S]-[ferredoxin] + NADP(+) + H(+) = 2 oxidized [2Fe-2S]-[ferredoxin] + NADPH. The sequence is that of Ferredoxin--NADP reductase from Chlorobium chlorochromatii (strain CaD3).